We begin with the raw amino-acid sequence, 895 residues long: MNCLANESLNSLKISPFSTSRLLSSVTNFRNQLSFSSKDSSSSSAPFNPFRFFNDQSNSRLCNLRTTKILQAHLLRRYLLPFDVFLTKSLLSWYSNSGSMADAAKLFDTIPQPDVVSCNIMISGYKQHRLFEESLRFFSKMHFLGFEANEISYGSVISACSALQAPLFSELVCCHTIKMGYFFYEVVESALIDVFSKNLRFEDAYKVFRDSLSANVYCWNTIIAGALRNQNYGAVFDLFHEMCVGFQKPDSYTYSSVLAACASLEKLRFGKVVQARVIKCGAEDVFVCTAIVDLYAKCGHMAEAMEVFSRIPNPSVVSWTVMLSGYTKSNDAFSALEIFKEMRHSGVEINNCTVTSVISACGRPSMVCEASQVHAWVFKSGFYLDSSVAAALISMYSKSGDIDLSEQVFEDLDDIQRQNIVNVMITSFSQSKKPGKAIRLFTRMLQEGLRTDEFSVCSLLSVLDCLNLGKQVHGYTLKSGLVLDLTVGSSLFTLYSKCGSLEESYKLFQGIPFKDNACWASMISGFNEYGYLREAIGLFSEMLDDGTSPDESTLAAVLTVCSSHPSLPRGKEIHGYTLRAGIDKGMDLGSALVNMYSKCGSLKLARQVYDRLPELDPVSCSSLISGYSQHGLIQDGFLLFRDMVMSGFTMDSFAISSILKAAALSDESSLGAQVHAYITKIGLCTEPSVGSSLLTMYSKFGSIDDCCKAFSQINGPDLIAWTALIASYAQHGKANEALQVYNLMKEKGFKPDKVTFVGVLSACSHGGLVEESYFHLNSMVKDYGIEPENRHYVCMVDALGRSGRLREAESFINNMHIKPDALVWGTLLAACKIHGEVELGKVAAKKAIELEPSDAGAYISLSNILAEVGEWDEVEETRKLMKGTGVQKEPGWSSV.

Residues 1 to 71 (MNCLANESLN…CNLRTTKILQ (71 aa)) constitute a chloroplast transit peptide. PPR repeat units follow at residues 83 to 113 (DVFLTKSLLSWYSNSGSMADAAKLFDTIPQP), 114 to 148 (DVVSCNIMISGYKQHRLFEESLRFFSKMHFLGFEA), 149 to 183 (NEISYGSVISACSALQAPLFSELVCCHTIKMGYFF), 184 to 214 (YEVVESALIDVFSKNLRFEDAYKVFRDSLSA), 215 to 249 (NVYCWNTIIAGALRNQNYGAVFDLFHEMCVGFQKP), 250 to 280 (DSYTYSSVLAACASLEKLRFGKVVQARVIKC), 284 to 314 (DVFVCTAIVDLYAKCGHMAEAMEVFSRIPNP), 315 to 349 (SVVSWTVMLSGYTKSNDAFSALEIFKEMRHSGVEI), 350 to 384 (NNCTVTSVISACGRPSMVCEASQVHAWVFKSGFYL), 385 to 415 (DSSVAAALISMYSKSGDIDLSEQVFEDLDDI), 417 to 451 (RQNIVNVMITSFSQSKKPGKAIRLFTRMLQEGLRT), 452 to 483 (DEFSVCSLLSVLDCLNLGKQVHGYTLKSGLVL), 484 to 514 (DLTVGSSLFTLYSKCGSLEESYKLFQGIPFK), 515 to 549 (DNACWASMISGFNEYGYLREAIGLFSEMLDDGTSP), 550 to 584 (DESTLAAVLTVCSSHPSLPRGKEIHGYTLRAGIDK), 585 to 615 (GMDLGSALVNMYSKCGSLKLARQVYDRLPEL), 616 to 650 (DPVSCSSLISGYSQHGLIQDGFLLFRDMVMSGFTM), 651 to 685 (DSFAISSILKAAALSDESSLGAQVHAYITKIGLCT), 686 to 716 (EPSVGSSLLTMYSKFGSIDDCCKAFSQINGP), 717 to 751 (DLIAWTALIASYAQHGKANEALQVYNLMKEKGFKP), 752 to 787 (DKVTFVGVLSACSHGGLVEESYFHLNSMVKDYGIEP), and 788 to 818 (ENRHYVCMVDALGRSGRLREAESFINNMHIK). The segment at 824–895 (WGTLLAACKI…VQKEPGWSSV (72 aa)) is type E motif; degenerate.

This sequence belongs to the PPR family. PCMP-E subfamily.

It localises to the plastid. The protein localises to the chloroplast. The protein is Pentatricopeptide repeat-containing protein At1g74600, chloroplastic (PCMP-E69) of Arabidopsis thaliana (Mouse-ear cress).